The chain runs to 117 residues: Peptidyl-tRNA hydrolase (117 aa).

Belongs to the PTH2 family.

The protein resides in the cytoplasm. It carries out the reaction an N-acyl-L-alpha-aminoacyl-tRNA + H2O = an N-acyl-L-amino acid + a tRNA + H(+). Functionally, the natural substrate for this enzyme may be peptidyl-tRNAs which drop off the ribosome during protein synthesis. In Thermoplasma volcanium (strain ATCC 51530 / DSM 4299 / JCM 9571 / NBRC 15438 / GSS1), this protein is Peptidyl-tRNA hydrolase.